The following is a 358-amino-acid chain: Phospho-N-acetylmuramoyl-pentapeptide-transferase (358 aa).

10 helical membrane-spanning segments follow: residues 3 to 23, 54 to 74, 84 to 104, 114 to 134, 156 to 176, 187 to 207, 231 to 251, 255 to 275, 283 to 303, and 330 to 350; these read QILF…PALI, GVAI…IGIA, ALLV…DDFI, LTAA…GVLA, ITTV…VVVA, LDGL…IITF, LALV…WNAA, IFMG…LSIT, VVIG…VAVF, and VIIR…GLFY.

This sequence belongs to the glycosyltransferase 4 family. MraY subfamily. Requires Mg(2+) as cofactor.

The protein resides in the cell membrane. It carries out the reaction UDP-N-acetyl-alpha-D-muramoyl-L-alanyl-gamma-D-glutamyl-meso-2,6-diaminopimeloyl-D-alanyl-D-alanine + di-trans,octa-cis-undecaprenyl phosphate = di-trans,octa-cis-undecaprenyl diphospho-N-acetyl-alpha-D-muramoyl-L-alanyl-D-glutamyl-meso-2,6-diaminopimeloyl-D-alanyl-D-alanine + UMP. It participates in cell wall biogenesis; peptidoglycan biosynthesis. In terms of biological role, catalyzes the initial step of the lipid cycle reactions in the biosynthesis of the cell wall peptidoglycan: transfers peptidoglycan precursor phospho-MurNAc-pentapeptide from UDP-MurNAc-pentapeptide onto the lipid carrier undecaprenyl phosphate, yielding undecaprenyl-pyrophosphoryl-MurNAc-pentapeptide, known as lipid I. The protein is Phospho-N-acetylmuramoyl-pentapeptide-transferase of Nocardia farcinica (strain IFM 10152).